Here is a 227-residue protein sequence, read N- to C-terminus: Fibrillarin-like rRNA/tRNA 2'-O-methyltransferase (227 aa).

S-adenosyl-L-methionine contacts are provided by residues 86–87 (TT), 105–106 (EF), 130–131 (DA), and 150–153 (DVAQ).

This sequence belongs to the methyltransferase superfamily. Fibrillarin family. As to quaternary structure, interacts with nop5. Component of box C/D small ribonucleoprotein (sRNP) particles that contain rpl7ae, FlpA and nop5, plus a guide RNA.

Its function is as follows. Involved in pre-rRNA and tRNA processing. Utilizes the methyl donor S-adenosyl-L-methionine to catalyze the site-specific 2'-hydroxyl methylation of ribose moieties in rRNA and tRNA. Site specificity is provided by a guide RNA that base pairs with the substrate. Methylation occurs at a characteristic distance from the sequence involved in base pairing with the guide RNA. This chain is Fibrillarin-like rRNA/tRNA 2'-O-methyltransferase, found in Pyrococcus horikoshii (strain ATCC 700860 / DSM 12428 / JCM 9974 / NBRC 100139 / OT-3).